Reading from the N-terminus, the 329-residue chain is GTP 3',8-cyclase (329 aa).

The Radical SAM core domain maps to 8 to 234 (AFARKYYYLR…QLRQRSDGPA (227 aa)). Position 17 (Arg-17) interacts with GTP. Residues Cys-24 and Cys-28 each contribute to the [4Fe-4S] cluster site. Tyr-30 contributes to the S-adenosyl-L-methionine binding site. Cys-31 contributes to the [4Fe-4S] cluster binding site. Arg-68 contributes to the GTP binding site. Gly-72 lines the S-adenosyl-L-methionine pocket. Thr-99 provides a ligand contact to GTP. Ser-123 is a binding site for S-adenosyl-L-methionine. Lys-160 is a GTP binding site. Met-194 lines the S-adenosyl-L-methionine pocket. [4Fe-4S] cluster contacts are provided by Cys-257 and Cys-260. 262 to 264 (RLR) serves as a coordination point for GTP. Cys-274 provides a ligand contact to [4Fe-4S] cluster.

It belongs to the radical SAM superfamily. MoaA family. Monomer and homodimer. The cofactor is [4Fe-4S] cluster.

It catalyses the reaction GTP + AH2 + S-adenosyl-L-methionine = (8S)-3',8-cyclo-7,8-dihydroguanosine 5'-triphosphate + 5'-deoxyadenosine + L-methionine + A + H(+). The protein operates within cofactor biosynthesis; molybdopterin biosynthesis. Functionally, catalyzes the cyclization of GTP to (8S)-3',8-cyclo-7,8-dihydroguanosine 5'-triphosphate. In Escherichia coli O17:K52:H18 (strain UMN026 / ExPEC), this protein is GTP 3',8-cyclase.